The sequence spans 163 residues: Nucleotide-binding protein AM1_1863 (163 aa).

Belongs to the YajQ family.

Functionally, nucleotide-binding protein. This chain is Nucleotide-binding protein AM1_1863, found in Acaryochloris marina (strain MBIC 11017).